Reading from the N-terminus, the 184-residue chain is ATP synthase subunit b, chloroplastic (184 aa).

Residues 27–49 (LATNLINLSVVLGVLIFFGKGVL) traverse the membrane as a helical segment.

This sequence belongs to the ATPase B chain family. In terms of assembly, F-type ATPases have 2 components, F(1) - the catalytic core - and F(0) - the membrane proton channel. F(1) has five subunits: alpha(3), beta(3), gamma(1), delta(1), epsilon(1). F(0) has four main subunits: a(1), b(1), b'(1) and c(10-14). The alpha and beta chains form an alternating ring which encloses part of the gamma chain. F(1) is attached to F(0) by a central stalk formed by the gamma and epsilon chains, while a peripheral stalk is formed by the delta, b and b' chains.

It is found in the plastid. Its subcellular location is the chloroplast thylakoid membrane. Functionally, f(1)F(0) ATP synthase produces ATP from ADP in the presence of a proton or sodium gradient. F-type ATPases consist of two structural domains, F(1) containing the extramembraneous catalytic core and F(0) containing the membrane proton channel, linked together by a central stalk and a peripheral stalk. During catalysis, ATP synthesis in the catalytic domain of F(1) is coupled via a rotary mechanism of the central stalk subunits to proton translocation. In terms of biological role, component of the F(0) channel, it forms part of the peripheral stalk, linking F(1) to F(0). This is ATP synthase subunit b, chloroplastic from Lactuca sativa (Garden lettuce).